We begin with the raw amino-acid sequence, 207 residues long: dTTP/UTP pyrophosphatase (207 aa).

The active-site Proton acceptor is the D87.

This sequence belongs to the Maf family. YhdE subfamily. Requires a divalent metal cation as cofactor.

The protein resides in the cytoplasm. It carries out the reaction dTTP + H2O = dTMP + diphosphate + H(+). The catalysed reaction is UTP + H2O = UMP + diphosphate + H(+). Its function is as follows. Nucleoside triphosphate pyrophosphatase that hydrolyzes dTTP and UTP. May have a dual role in cell division arrest and in preventing the incorporation of modified nucleotides into cellular nucleic acids. The chain is dTTP/UTP pyrophosphatase from Ralstonia nicotianae (strain ATCC BAA-1114 / GMI1000) (Ralstonia solanacearum).